The primary structure comprises 520 residues: Ribonuclease Y (520 aa).

The helical transmembrane segment at 1–21 (MDIITIIIAVIAGIGGGFGIS) threads the bilayer. One can recognise a KH domain in the interval 210 to 276 (CVSVFNIESD…RLALHKLVTD (67 aa)). Residues 336-429 (LLQHSREVSK…VQVCDAISGA (94 aa)) enclose the HD domain.

This sequence belongs to the RNase Y family.

The protein resides in the cell membrane. Its function is as follows. Endoribonuclease that initiates mRNA decay. The polypeptide is Ribonuclease Y (Flavobacterium psychrophilum (strain ATCC 49511 / DSM 21280 / CIP 103535 / JIP02/86)).